Here is a 117-residue protein sequence, read N- to C-terminus: Large ribosomal subunit protein bL19 (117 aa).

This sequence belongs to the bacterial ribosomal protein bL19 family.

Functionally, this protein is located at the 30S-50S ribosomal subunit interface and may play a role in the structure and function of the aminoacyl-tRNA binding site. The sequence is that of Large ribosomal subunit protein bL19 from Alkaliphilus metalliredigens (strain QYMF).